Here is a 476-residue protein sequence, read N- to C-terminus: uncharacterized protein (476 aa).

10 helical membrane passes run 4 to 24, 81 to 101, 141 to 161, 174 to 194, 207 to 227, 233 to 253, 300 to 320, 351 to 371, 391 to 411, and 414 to 434; these read FFSFINSVLWGSVMIYLLFGA, ALAITAGGPGAVFWMWVAAFI, WMGVLFAVFLLIAYGIIFSGV, FDFPPLVTGIILAVFTLLAIT, FVPLMAIIWVLTSLVICVMNI, VIWSIFESAFGWQEAAGGAAG, MIGIFIDTLVICTASAMLILL, FVTLVVILFAFSSIVANYIYA, ICTFATVIGGTLLSLPLMWQL, and IIMACMAITNLTAILLLSPVV.

Belongs to the alanine or glycine:cation symporter (AGCS) (TC 2.A.25) family.

It localises to the cell inner membrane. This is an uncharacterized protein from Escherichia coli (strain K12).